Consider the following 38-residue polypeptide: Histidine decarboxylase small chain (38 aa).

In terms of assembly, heterohexamer of 3 large and 3 small chains. Pyruvate serves as cofactor.

It catalyses the reaction L-histidine + H(+) = histamine + CO2. In Micrococcus sp, this protein is Histidine decarboxylase small chain.